An 83-amino-acid chain; its full sequence is Large ribosomal subunit protein eL31 (83 aa).

It belongs to the eukaryotic ribosomal protein eL31 family.

The sequence is that of Large ribosomal subunit protein eL31 from Methanococcus vannielii (strain ATCC 35089 / DSM 1224 / JCM 13029 / OCM 148 / SB).